The following is a 235-amino-acid chain: Mitochondrial inner membrane protease ATP23 homolog (235 aa).

Histidine 114 provides a ligand contact to a divalent metal cation. Glutamate 115 is an active-site residue. Histidine 118 is a binding site for a divalent metal cation.

The protein belongs to the peptidase M76 family.

The polypeptide is Mitochondrial inner membrane protease ATP23 homolog (atp23) (Xenopus laevis (African clawed frog)).